A 111-amino-acid polypeptide reads, in one-letter code: Nucleoid-associated protein PputGB1_3833 (111 aa).

Disordered regions lie at residues 1-25 (MMKG…KMQE) and 87-111 (EQSS…KMPF).

The protein belongs to the YbaB/EbfC family. In terms of assembly, homodimer.

It localises to the cytoplasm. The protein localises to the nucleoid. Binds to DNA and alters its conformation. May be involved in regulation of gene expression, nucleoid organization and DNA protection. This chain is Nucleoid-associated protein PputGB1_3833, found in Pseudomonas putida (strain GB-1).